Reading from the N-terminus, the 67-residue chain is Small ribosomal subunit protein bS21 (67 aa).

It belongs to the bacterial ribosomal protein bS21 family.

This is Small ribosomal subunit protein bS21 from Oleidesulfovibrio alaskensis (strain ATCC BAA-1058 / DSM 17464 / G20) (Desulfovibrio alaskensis).